Here is a 665-residue protein sequence, read N- to C-terminus: FAD-dependent oxidoreductase domain-containing protein 2 (665 aa).

Residues 1-17 (MGPSGLLVALALHLAVC) form the signal peptide. The N-linked (GlcNAc...) asparagine glycan is linked to Asn-136. A disordered region spans residues 642–665 (RWLGDHSTAPEPLTQSLDSNKEEL). The short motif at 662–665 (KEEL) is the Prevents secretion from ER element.

Belongs to the FOXRED2 family. As to quaternary structure, interacts with SEL1L. May interact with OS9 and DNAJC10. Interacts with TXNDC16. FAD serves as cofactor. Post-translationally, N-glycosylated.

It localises to the endoplasmic reticulum lumen. In terms of biological role, probable flavoprotein which may function in endoplasmic reticulum associated degradation (ERAD). May bind non-native proteins in the endoplasmic reticulum and target them to the ubiquitination machinery for subsequent degradation. This Mus musculus (Mouse) protein is FAD-dependent oxidoreductase domain-containing protein 2.